The chain runs to 153 residues: Regulatory protein RecX (153 aa).

The protein belongs to the RecX family.

The protein resides in the cytoplasm. Modulates RecA activity. This is Regulatory protein RecX from Syntrophotalea carbinolica (strain DSM 2380 / NBRC 103641 / GraBd1) (Pelobacter carbinolicus).